The primary structure comprises 151 residues: Ribosome maturation factor RimP (151 aa).

Belongs to the RimP family.

It is found in the cytoplasm. Required for maturation of 30S ribosomal subunits. This is Ribosome maturation factor RimP from Hydrogenovibrio crunogenus (strain DSM 25203 / XCL-2) (Thiomicrospira crunogena).